The sequence spans 566 residues: Putative UDP-glucuronate:xylan alpha-glucuronosyltransferase 5 (566 aa).

Residues 17–37 (LILISLSFLGLLLNFKPLFLL) traverse the membrane as a helical; Signal-anchor for type II membrane protein segment. Residues aspartate 372 and aspartate 374 each coordinate Mn(2+). Substrate is bound by residues 372–374 (DAD), 401–403 (NSG), 428–432 (NGGDQ), and 475–480 (HYLGLK). Mn(2+) is bound at residue histidine 475.

This sequence belongs to the glycosyltransferase 8 family. Glycogenin subfamily. Requires Mn(2+) as cofactor.

It localises to the golgi apparatus membrane. May be involved in the substitutions of the xylan backbone in stem glucuronoxylan. This chain is Putative UDP-glucuronate:xylan alpha-glucuronosyltransferase 5 (GUX5), found in Arabidopsis thaliana (Mouse-ear cress).